The sequence spans 64 residues: DNA-directed RNA polymerase subunit Rpo10 (64 aa).

Residues Cys-7, Cys-10, Cys-45, and Cys-46 each contribute to the Zn(2+) site.

It belongs to the archaeal Rpo10/eukaryotic RPB10 RNA polymerase subunit family. Part of the RNA polymerase complex. Zn(2+) is required as a cofactor.

It localises to the cytoplasm. The enzyme catalyses RNA(n) + a ribonucleoside 5'-triphosphate = RNA(n+1) + diphosphate. DNA-dependent RNA polymerase (RNAP) catalyzes the transcription of DNA into RNA using the four ribonucleoside triphosphates as substrates. The sequence is that of DNA-directed RNA polymerase subunit Rpo10 from Halorubrum lacusprofundi (strain ATCC 49239 / DSM 5036 / JCM 8891 / ACAM 34).